The chain runs to 204 residues: Large ribosomal subunit protein bL25 (204 aa).

The protein belongs to the bacterial ribosomal protein bL25 family. CTC subfamily. As to quaternary structure, part of the 50S ribosomal subunit; part of the 5S rRNA/L5/L18/L25 subcomplex. Contacts the 5S rRNA. Binds to the 5S rRNA independently of L5 and L18.

Functionally, this is one of the proteins that binds to the 5S RNA in the ribosome where it forms part of the central protuberance. This Rhizobium etli (strain ATCC 51251 / DSM 11541 / JCM 21823 / NBRC 15573 / CFN 42) protein is Large ribosomal subunit protein bL25.